A 264-amino-acid polypeptide reads, in one-letter code: Acetylglutamate kinase (264 aa).

Substrate contacts are provided by residues 50–51 (GG), R72, and N164.

The protein belongs to the acetylglutamate kinase family. ArgB subfamily.

The protein resides in the cytoplasm. It catalyses the reaction N-acetyl-L-glutamate + ATP = N-acetyl-L-glutamyl 5-phosphate + ADP. Its pathway is amino-acid biosynthesis; L-arginine biosynthesis; N(2)-acetyl-L-ornithine from L-glutamate: step 2/4. Its function is as follows. Catalyzes the ATP-dependent phosphorylation of N-acetyl-L-glutamate. This Moritella profunda protein is Acetylglutamate kinase.